We begin with the raw amino-acid sequence, 323 residues long: tRNA U34 carboxymethyltransferase (323 aa).

Residues Lys-91, Trp-105, Lys-110, Gly-130, 152–154 (DPT), 181–182 (IE), Met-196, Tyr-200, and Arg-315 each bind carboxy-S-adenosyl-L-methionine.

It belongs to the class I-like SAM-binding methyltransferase superfamily. CmoB family. As to quaternary structure, homotetramer.

It carries out the reaction carboxy-S-adenosyl-L-methionine + 5-hydroxyuridine(34) in tRNA = 5-carboxymethoxyuridine(34) in tRNA + S-adenosyl-L-homocysteine + H(+). Functionally, catalyzes carboxymethyl transfer from carboxy-S-adenosyl-L-methionine (Cx-SAM) to 5-hydroxyuridine (ho5U) to form 5-carboxymethoxyuridine (cmo5U) at position 34 in tRNAs. The polypeptide is tRNA U34 carboxymethyltransferase (Salmonella paratyphi B (strain ATCC BAA-1250 / SPB7)).